The following is a 1450-amino-acid chain: Phospholipase B1, membrane-associated (1450 aa).

A signal peptide spans 1 to 27 (MESWPGVSLVGLLLLLLLGQGPSQIHG). The Extracellular portion of the chain corresponds to 28–1422 (SSGENTSQPQ…KAKENSNTLY (1395 aa)). Residues N32, N45, and N179 are each glycosylated (N-linked (GlcNAc...) asparagine). Tandem repeats lie at residues 41–351 (RTLK…YRNS), 366–711 (MKEG…TKNS), and 712–1058 (NLGH…FRNS). Residues 41-1407 (RTLKNFSFPC…NPFLYTVRNS (1367 aa)) form a 4 X 308-326 AA approximate repeats region. Active-site residues include S404, D518, and H659. A glycan (N-linked (GlcNAc...) asparagine) is linked at N699. Residues 708–720 (TKNSNLGHGTSMS) show a composition bias toward polar residues. The disordered stretch occupies residues 708 to 734 (TKNSNLGHGTSMSCEEKAPSASPPTSV). 10 N-linked (GlcNAc...) asparagine glycosylation sites follow: N787, N801, N844, N880, N926, N1059, N1226, N1280, N1383, and N1387. Residues 1068-1407 (IENWGSDFLC…NPFLYTVRNS (340 aa)) form repeat 4. The segment at 1408-1450 (QILLDKAKENSNTLYWAVPVAAVGGLVVGILGMMLWRTVRLVQ) is necessary for membrane localization. A helical transmembrane segment spans residues 1423 to 1443 (WAVPVAAVGGLVVGILGMMLW). Over 1444-1450 (RTVRLVQ) the chain is Cytoplasmic.

Belongs to the 'GDSL' lipolytic enzyme family. Phospholipase B1 subfamily. Undergoes proteolytic cleavage in the ileum. In terms of tissue distribution, expressed in the ileum mucosa, Paneth cells spermatocytes, spermatids and sperm (at protein level). Expressed in the ileum, jejunum, esophagus and testis.

Its subcellular location is the apical cell membrane. The enzyme catalyses a 1,2-diacyl-sn-glycero-3-phosphocholine + H2O = a 1-acyl-sn-glycero-3-phosphocholine + a fatty acid + H(+). The catalysed reaction is a 1-O-alkyl-2-acyl-sn-glycero-3-phosphocholine + H2O = a 1-O-alkyl-sn-glycero-3-phosphocholine + a fatty acid + H(+). It catalyses the reaction a 1-acyl-sn-glycero-3-phosphocholine + H2O = sn-glycerol 3-phosphocholine + a fatty acid + H(+). It carries out the reaction a triacylglycerol + H2O = a diacylglycerol + a fatty acid + H(+). The enzyme catalyses 1,2-dihexadecanoyl-sn-glycero-3-phosphocholine + H2O = 1-hexadecanoyl-sn-glycero-3-phosphocholine + hexadecanoate + H(+). The catalysed reaction is 1-hexadecanoyl-2-(9Z-octadecenoyl)-sn-glycero-3-phosphocholine + H2O = 1-hexadecanoyl-sn-glycero-3-phosphocholine + (9Z)-octadecenoate + H(+). It catalyses the reaction 1,2-di-(9Z-octadecenoyl)-sn-glycero-3-phosphocholine + H2O = 1-(9Z-octadecenoyl)-sn-glycero-3-phosphocholine + (9Z)-octadecenoate + H(+). It carries out the reaction 1-hexadecanoyl-2-(9Z,12Z-octadecadienoyl)-sn-glycero-3-phosphocholine + H2O = (9Z,12Z)-octadecadienoate + 1-hexadecanoyl-sn-glycero-3-phosphocholine + H(+). The enzyme catalyses 1-hexadecanoyl-2-(9Z,12Z-octadecadienoyl)-sn-glycero-3-phosphocholine + H2O = 2-(9Z,12Z-octadecadienoyl)-sn-glycero-3-phosphocholine + hexadecanoate + H(+). The catalysed reaction is 1-hexadecanoyl-2-(9Z-octadecenoyl)-sn-glycero-3-phosphoethanolamine + H2O = 1-hexadecanoyl-sn-glycero-3-phosphoethanolamine + (9Z)-octadecenoate + H(+). It catalyses the reaction 1-hexadecanoyl-2-(9Z-octadecenoyl)-sn-glycero-3-phospho-(1'-sn-glycerol) + H2O = 1-hexadecanoyl-sn-glycero-3-phospho-(1'-sn-glycerol) + (9Z)-octadecenoate + H(+). It carries out the reaction 1,2-dihexadecanoyl-sn-glycero-3-phosphocholine + 2 H2O = sn-glycerol 3-phosphocholine + 2 hexadecanoate + 2 H(+). The enzyme catalyses 1-O-hexadecyl-2-(9Z)-octadecenoyl-sn-glycero-3-phosphocholine + H2O = 1-O-hexadecyl-sn-glycero-3-phosphocholine + (9Z)-octadecenoate + H(+). The catalysed reaction is 1-hexadecanoyl-sn-glycero-3-phosphocholine + H2O = sn-glycerol 3-phosphocholine + hexadecanoate + H(+). It catalyses the reaction 1,2,3-tri-(9Z-octadecenoyl)-glycerol + H2O = di-(9Z)-octadecenoylglycerol + (9Z)-octadecenoate + H(+). It carries out the reaction 1-hexadecanoyl-2-(9Z)-octadecenoyl-3-octadecanoyl-sn-glycerol + H2O = 1-hexadecanoyl-2-(9Z-octadecenoyl)-sn-glycerol + octadecanoate + H(+). The enzyme catalyses 1,3-dihexadecanoyl-2-(9Z-octadecenoyl)glycerol + H2O = 1,3-dihexadecanoylglycerol + (9Z)-octadecenoate + H(+). The catalysed reaction is 1,3-dihexadecanoyl-2-(9Z-octadecenoyl)glycerol + H2O = 1-hexadecanoyl-2-(9Z-octadecenoyl)-glycerol + hexadecanoate + H(+). It catalyses the reaction 1-hexadecanoyl-2-(9Z)-octadecenoyl-3-octadecanoyl-sn-glycerol + H2O = 1-hexadecanoyl-3-octadecanoyl-sn-glycerol + (9Z)-octadecenoate + H(+). It carries out the reaction 1-hexadecanoyl-2-(9Z)-octadecenoyl-3-octadecanoyl-sn-glycerol + H2O = 2-(9Z-octadecenoyl)-3-octadecanoyl-sn-glycerol + hexadecanoate + H(+). The enzyme catalyses 1-octadecanoyl-2-(9Z,12Z)-octadecadienoyl-sn-glycerol + H2O = 1-octadecanoyl-sn-glycerol + (9Z,12Z)-octadecadienoate + H(+). The catalysed reaction is 1,2-di-(9Z-octadecenoyl)-sn-glycerol + H2O = 1-(9Z-octadecenoyl)-sn-glycerol + (9Z)-octadecenoate + H(+). It catalyses the reaction 2,3-di-(9Z)-octadecenoyl-sn-glycerol + H2O = 3-(9Z-octadecenoyl)-sn-glycerol + (9Z)-octadecenoate + H(+). It carries out the reaction 1,3-di-(9Z-octadecenoyl)-glycerol + H2O = 1-(9Z-octadecenoyl)-glycerol + (9Z)-octadecenoate + H(+). The enzyme catalyses 1-(9Z-octadecenoyl)-glycerol + H2O = glycerol + (9Z)-octadecenoate + H(+). The catalysed reaction is 2-(9Z-octadecenoyl)-glycerol + H2O = glycerol + (9Z)-octadecenoate + H(+). Up-regulated by bile acids such as deoxycholate. Inhibited by diisopropyl fluorophosphate. In terms of biological role, calcium-independent membrane-associated phospholipase that catalyzes complete diacylation of phospholipids by hydrolyzing both sn-1 and sn-2 fatty acyl chains attached to the glycerol backbone (phospholipase B activity). Has dual phospholipase and lysophospholipase activities toward diacylphospholipids. Preferentially cleaves sn-2 ester bonds over sn-1 bonds. Acts as a lipase toward glycerolipid substrates. Hydrolyzes fatty acyl chains of diacylglycerols with preference for the sn-2 position and of triacylglycerols with not positional selectivity. May also hydrolyze long chain retinyl esters such as retinyl palmitate. May contribute to digestion of dietary phospholipids, glycerolipids and retinoids, facilitating lipid absorption at the brush border. This chain is Phospholipase B1, membrane-associated (Plb1), found in Rattus norvegicus (Rat).